Here is a 274-residue protein sequence, read N- to C-terminus: Thymidylate synthase (274 aa).

Position 21 (R21) interacts with dUMP. Residue H51 coordinates (6R)-5,10-methylene-5,6,7,8-tetrahydrofolate. Residue 123–124 participates in dUMP binding; sequence RR. C156 functions as the Nucleophile in the catalytic mechanism. DUMP contacts are provided by residues 176–179, N187, and 217–219; these read RSAD and HIY. Position 179 (D179) interacts with (6R)-5,10-methylene-5,6,7,8-tetrahydrofolate. Residue A273 coordinates (6R)-5,10-methylene-5,6,7,8-tetrahydrofolate.

This sequence belongs to the thymidylate synthase family. Bacterial-type ThyA subfamily. In terms of assembly, homodimer.

It localises to the cytoplasm. The catalysed reaction is dUMP + (6R)-5,10-methylene-5,6,7,8-tetrahydrofolate = 7,8-dihydrofolate + dTMP. Its pathway is pyrimidine metabolism; dTTP biosynthesis. Functionally, catalyzes the reductive methylation of 2'-deoxyuridine-5'-monophosphate (dUMP) to 2'-deoxythymidine-5'-monophosphate (dTMP) while utilizing 5,10-methylenetetrahydrofolate (mTHF) as the methyl donor and reductant in the reaction, yielding dihydrofolate (DHF) as a by-product. This enzymatic reaction provides an intracellular de novo source of dTMP, an essential precursor for DNA biosynthesis. This Christiangramia forsetii (strain DSM 17595 / CGMCC 1.15422 / KT0803) (Gramella forsetii) protein is Thymidylate synthase.